Reading from the N-terminus, the 86-residue chain is Thioredoxin (86 aa).

Catalysis depends on nucleophile residues C15 and C18. Cysteines 15 and 18 form a disulfide.

Belongs to the glutaredoxin family.

Does not function as a glutathione-disulfide oxidoreductase in the presence of glutathione and glutathione reductase. Has low thioredoxin activity in vitro. The protein is Thioredoxin of Methanocaldococcus jannaschii (strain ATCC 43067 / DSM 2661 / JAL-1 / JCM 10045 / NBRC 100440) (Methanococcus jannaschii).